The following is a 160-amino-acid chain: Small ribosomal subunit protein uS7 (160 aa).

This sequence belongs to the universal ribosomal protein uS7 family. As to quaternary structure, part of the 30S ribosomal subunit. Contacts proteins S9 and S11.

In terms of biological role, one of the primary rRNA binding proteins, it binds directly to 16S rRNA where it nucleates assembly of the head domain of the 30S subunit. Is located at the subunit interface close to the decoding center, probably blocks exit of the E-site tRNA. This chain is Small ribosomal subunit protein uS7, found in Ehrlichia ruminantium (strain Gardel).